Consider the following 291-residue polypeptide: tRNA-cytidine(32) 2-sulfurtransferase (291 aa).

Residues 36-41 (SGGKDS) carry the PP-loop motif motif. [4Fe-4S] cluster contacts are provided by cysteine 111, cysteine 114, and cysteine 202. Residues 259 to 291 (DPWLDAEDEEAEDCGEPSAGDGVVSLGGARGGR) are disordered. Over residues 262–273 (LDAEDEEAEDCG) the composition is skewed to acidic residues.

The protein belongs to the TtcA family. As to quaternary structure, homodimer. Requires Mg(2+) as cofactor. It depends on [4Fe-4S] cluster as a cofactor.

Its subcellular location is the cytoplasm. The enzyme catalyses cytidine(32) in tRNA + S-sulfanyl-L-cysteinyl-[cysteine desulfurase] + AH2 + ATP = 2-thiocytidine(32) in tRNA + L-cysteinyl-[cysteine desulfurase] + A + AMP + diphosphate + H(+). The protein operates within tRNA modification. In terms of biological role, catalyzes the ATP-dependent 2-thiolation of cytidine in position 32 of tRNA, to form 2-thiocytidine (s(2)C32). The sulfur atoms are provided by the cysteine/cysteine desulfurase (IscS) system. This Anaeromyxobacter sp. (strain K) protein is tRNA-cytidine(32) 2-sulfurtransferase.